Reading from the N-terminus, the 65-residue chain is Beta-mammal toxin Tpa2 (65 aa).

Residues 2–64 (KEGYLVGNDG…TWSRATNRCG (63 aa)) enclose the LCN-type CS-alpha/beta domain. 4 disulfide bridges follow: Cys12/Cys63, Cys16/Cys38, Cys24/Cys44, and Cys28/Cys46.

In terms of tissue distribution, expressed by the venom gland.

It localises to the secreted. Functionally, beta toxins bind voltage-independently at site-4 of sodium channels (Nav) and shift the voltage of activation toward more negative potentials thereby affecting sodium channel activation and promoting spontaneous and repetitive firing. This toxin is lethal to mice. The sequence is that of Beta-mammal toxin Tpa2 from Tityus pachyurus (Colombian scorpion).